A 121-amino-acid polypeptide reads, in one-letter code: MIQRQTYLNVADNSGAKKVQVIGIPYAPRKYATLRDVVTVTVKEALPQGNAKKGKIYRAIIVRTAKEVRRPDGSYIKFDDNACVLLNQYGEPLGTRVLGPIAREVRNKGFTKIASLAPEVV.

The protein belongs to the universal ribosomal protein uL14 family. Part of the 50S ribosomal subunit. Forms a cluster with proteins L3 and L19. In the 70S ribosome, L14 and L19 interact and together make contacts with the 16S rRNA in bridges B5 and B8.

Functionally, binds to 23S rRNA. Forms part of two intersubunit bridges in the 70S ribosome. This is Large ribosomal subunit protein uL14 from Aquifex pyrophilus.